An 879-amino-acid polypeptide reads, in one-letter code: Prostaglandin F2 receptor negative regulator (879 aa).

A signal peptide spans 1–21 (MGRPAPRPLLLALLSLAVCRG). Ig-like C2-type domains follow at residues 22 to 129 (RVVR…ATVQ) and 149 to 268 (PSSR…KAVE). Topologically, residues 22 to 832 (RVVRVPAGTL…MDVLNAFKYP (811 aa)) are extracellular. 2 disulfides stabilise this stretch: C43-C119 and C169-C247. A glycan (N-linked (GlcNAc...) asparagine) is linked at N44. The Cell attachment site motif lies at 89–91 (RGD). T271 is modified (phosphothreonine). Ig-like C2-type domains follow at residues 276–389 (PTAL…WHKV), 406–527 (PEYQ…RNSS), 544–662 (ASED…AWSP), and 688–813 (PIFN…AEIH). The cysteines at positions 299 and 373 are disulfide-linked. N300, N383, and N413 each carry an N-linked (GlcNAc...) asparagine glycan. Positions 424–427 (PTEL) match the Endoplasmic reticulum retention signal motif. An intrachain disulfide couples C429 to C515. Residues N525, N600, N618, and N691 are each glycosylated (N-linked (GlcNAc...) asparagine). The cysteines at positions 571 and 655 are disulfide-linked. A Cell attachment site motif is present at residues 703–705 (RGD). An intrachain disulfide couples C711 to C793. The chain crosses the membrane as a helical span at residues 833–853 (LLIGVGLSTVIGLLSCLIGYC). Residues 854–879 (SSHWCCKKEVRETRRERRRLMSMEMD) lie on the Cytoplasmic side of the membrane.

In terms of assembly, interacts with CD9 and CD81. Part of a complex composed of CD9, CD81 and IGSF8. Also seems to interact with CD63, CD82 and CD151. In terms of tissue distribution, reproductive tissues, lung and heart.

Its subcellular location is the endoplasmic reticulum membrane. The protein resides in the golgi apparatus. It is found in the trans-Golgi network membrane. Its function is as follows. Inhibits the binding of prostaglandin F2-alpha (PGF2-alpha) to its specific FP receptor, by decreasing the receptor number rather than the affinity constant. Functional coupling with the prostaglandin F2-alpha receptor seems to occur. In myoblasts, associates with tetraspanins CD9 and CD81 to prevent myotube fusion during muscle regeneration. The protein is Prostaglandin F2 receptor negative regulator (Ptgfrn) of Rattus norvegicus (Rat).